Consider the following 392-residue polypeptide: Protein O-glucosyltransferase 1 (392 aa).

An N-terminal signal peptide occupies residues 1–23; sequence MERLSGCRLRPWMLLLLLFPVQG. 4 disulfides stabilise this stretch: Cys49/Cys56, Cys54/Cys357, Cys102/Cys108, and Cys263/Cys286. A glycan (N-linked (GlcNAc...) asparagine) is linked at Asn53. Residues 103–107 are interaction with the consensus sequence C-X-S-X-[PA]-C in peptide substrates; sequence MFPSR. The active-site Proton donor/acceptor is the Asp133. The interval 172-178 is interaction with the consensus sequence C-X-S-X-[PA]-C in peptide substrates; that stretch reads AVWPLYP. Tyr177 provides a ligand contact to UDP-alpha-D-glucose. N-linked (GlcNAc...) asparagine glycosylation occurs at Asn204. Residues Ser212, Arg218, and 274 to 279 each bind UDP-alpha-D-glucose; that span reads VAASFR. A glycan (N-linked (GlcNAc...) asparagine) is linked at Asn373. The Prevents secretion from ER motif lies at 389-392; sequence KTEL.

It belongs to the glycosyltransferase 90 family.

The protein localises to the endoplasmic reticulum lumen. It carries out the reaction L-seryl-[EGF-like domain protein] + UDP-alpha-D-xylose = 3-O-(beta-D-xylosyl)-L-seryl-[EGF-like domain protein] + UDP + H(+). It catalyses the reaction L-seryl-[EGF-like domain protein] + UDP-alpha-D-glucose = 3-O-(beta-D-glucosyl)-L-seryl-[EGF-like domain protein] + UDP + H(+). It participates in protein modification; protein glycosylation. Functionally, dual specificity glycosyltransferase that catalyzes the transfer of glucose and xylose from UDP-glucose and UDP-xylose, respectively, to a serine residue found in the consensus sequence of C-X-S-X-P-C. Specifically targets extracellular EGF repeats of protein such as CRB2, F7, F9 and NOTCH2. Acts as a positive regulator of Notch signaling by mediating O-glucosylation of Notch, leading to regulate muscle development. Notch glucosylation does not affect Notch ligand binding. Required during early development to promote gastrulation: acts by mediating O-glucosylation of CRB2, which is required for CRB2 localization to the cell membrane. The sequence is that of Protein O-glucosyltransferase 1 (Poglut1) from Rattus norvegicus (Rat).